Consider the following 807-residue polypeptide: Glycerol-3-phosphate acyltransferase (807 aa).

An HXXXXD motif motif is present at residues 305–310; it reads CHRSHM.

This sequence belongs to the GPAT/DAPAT family.

Its subcellular location is the cell inner membrane. It catalyses the reaction sn-glycerol 3-phosphate + an acyl-CoA = a 1-acyl-sn-glycero-3-phosphate + CoA. It participates in phospholipid metabolism; CDP-diacylglycerol biosynthesis; CDP-diacylglycerol from sn-glycerol 3-phosphate: step 1/3. The polypeptide is Glycerol-3-phosphate acyltransferase (Shigella boydii serotype 18 (strain CDC 3083-94 / BS512)).